Here is a 251-residue protein sequence, read N- to C-terminus: NADPH-dependent oxidoreductase (251 aa).

The protein belongs to the flavin oxidoreductase frp family. It depends on FMN as a cofactor.

Reduces FMN, organic nitro compounds and disulfide DTNB. Involved in maintenance of the cellular redox state and the disulfide stress response. This is NADPH-dependent oxidoreductase (nfrA) from Staphylococcus aureus (strain Mu50 / ATCC 700699).